A 220-amino-acid polypeptide reads, in one-letter code: Redox-sensing transcriptional repressor Rex (220 aa).

Positions 17–56 (LYARSLRYLLQEGVESVSSQELGDRINVTAAQIRKDLSYF) form a DNA-binding region, H-T-H motif. 91-96 (GIGHLG) is an NAD(+) binding site.

Belongs to the transcriptional regulatory Rex family. Homodimer.

The protein localises to the cytoplasm. Functionally, modulates transcription in response to changes in cellular NADH/NAD(+) redox state. In Roseiflexus sp. (strain RS-1), this protein is Redox-sensing transcriptional repressor Rex.